We begin with the raw amino-acid sequence, 527 residues long: Probable protein kinase UbiB (527 aa).

A Protein kinase domain is found at 123 to 527 (EFNETALASA…AIWLLIYLLS (405 aa)). Residues 129–137 (LASASIAQV) and Lys161 contribute to the ATP site. Asp296 serves as the catalytic Proton acceptor. Residues 506 to 526 (FTSFILGLCTGLAIWLLIYLL) traverse the membrane as a helical segment.

This sequence belongs to the ABC1 family. UbiB subfamily.

It is found in the cell inner membrane. It participates in cofactor biosynthesis; ubiquinone biosynthesis [regulation]. In terms of biological role, is probably a protein kinase regulator of UbiI activity which is involved in aerobic coenzyme Q (ubiquinone) biosynthesis. The sequence is that of Probable protein kinase UbiB from Pasteurella multocida (strain Pm70).